We begin with the raw amino-acid sequence, 430 residues long: uncharacterized protein (430 aa).

Transmembrane regions (helical) follow at residues 20 to 40 (YLCL…GIMP) and 405 to 425 (YIWW…LLVI).

It is found in the membrane. This is an uncharacterized protein from Schizosaccharomyces pombe (strain 972 / ATCC 24843) (Fission yeast).